The primary structure comprises 282 residues: Putative phosphatase MPN_383 (282 aa).

The Nucleophile role is filled by Asp-11. Position 11 (Asp-11) interacts with Mg(2+). Phosphate is bound at residue Leu-12. A Mg(2+)-binding site is contributed by Asp-13. Phosphate is bound by residues 45–46 (TG) and Lys-207. Position 230 (Asp-230) interacts with Mg(2+). Residue Asn-233 participates in phosphate binding.

The protein belongs to the HAD-like hydrolase superfamily. Cof family. Mg(2+) is required as a cofactor.

This chain is Putative phosphatase MPN_383, found in Mycoplasma pneumoniae (strain ATCC 29342 / M129 / Subtype 1) (Mycoplasmoides pneumoniae).